The following is a 216-amino-acid chain: UPF0711 protein C18orf21 homolog (216 aa).

2 disordered regions span residues 118–185 and 197–216; these read RSFL…ASKT and SQSE…LSSL. Residues 124–136 show a composition bias toward polar residues; the sequence is LKSNPTTPTSKLS. A Phosphoserine modification is found at serine 126. A phosphothreonine mark is found at threonine 130 and threonine 139. 2 stretches are compositionally biased toward polar residues: residues 145 to 157 and 167 to 182; these read PSSA…SGSK and TPTS…SKNA. Residues 200–209 are compositionally biased toward basic and acidic residues; that stretch reads ESKKNPKMDF.

This sequence belongs to the UPF0711 family.

The sequence is that of UPF0711 protein C18orf21 homolog from Bos taurus (Bovine).